Here is a 302-residue protein sequence, read N- to C-terminus: Acetylglutamate kinase (302 aa).

Substrate contacts are provided by residues 75–76 (GG), Arg97, and Asn198.

Belongs to the acetylglutamate kinase family. ArgB subfamily.

It is found in the cytoplasm. It carries out the reaction N-acetyl-L-glutamate + ATP = N-acetyl-L-glutamyl 5-phosphate + ADP. Its pathway is amino-acid biosynthesis; L-arginine biosynthesis; N(2)-acetyl-L-ornithine from L-glutamate: step 2/4. Catalyzes the ATP-dependent phosphorylation of N-acetyl-L-glutamate. The sequence is that of Acetylglutamate kinase from Leifsonia xyli subsp. xyli (strain CTCB07).